The following is a 396-amino-acid chain: Phosphoglycerate kinase (396 aa).

Substrate contacts are provided by residues 21 to 23 (DLN), Arg36, 59 to 62 (HLGR), Arg113, and Arg146. Residues Lys197, Glu319, and 345 to 348 (GGDT) each bind ATP.

It belongs to the phosphoglycerate kinase family. In terms of assembly, monomer.

It localises to the cytoplasm. It catalyses the reaction (2R)-3-phosphoglycerate + ATP = (2R)-3-phospho-glyceroyl phosphate + ADP. It participates in carbohydrate degradation; glycolysis; pyruvate from D-glyceraldehyde 3-phosphate: step 2/5. In Legionella pneumophila (strain Paris), this protein is Phosphoglycerate kinase.